The following is a 2476-amino-acid chain: Zonadhesin (2476 aa).

A signal peptide spans 1–29 (MLGLPALAGPMAMPHPPLIPSTPTLLAFS). Over 30 to 2418 (FPGGFYMLLD…SPKKPEASNR (2389 aa)) the chain is Extracellular. 2 consecutive MAM domains span residues 31-144 (PGGF…PCEE) and 147-312 (PQCD…TCRG). Residues N109 and N269 are each glycosylated (N-linked (GlcNAc...) asparagine). 3 disordered regions span residues 313-332 (PSETSVSTEKPVAPTEKPTV), 358-462 (PTVP…TERT), and 537-632 (ERTT…RTTI). A 53 X approximate heptapeptide repeats (mucin-like domain) region spans residues 319–687 (STEKPVAPTE…ATTVTPRTTI (369 aa)). A compositionally biased stretch (low complexity) spans 358–373 (PTVPTEKPTIPTEKST). Residues 400–412 (TTPPEGPAVPPKG) show a composition bias toward pro residues. Basic and acidic residues predominate over residues 423-433 (HTEKSTVHTEK). Residues 451-462 (PTKRTTTPTERT) are compositionally biased toward low complexity. The 50-residue stretch at 690–739 (CPPNAHFERCACPVSCQSPTPNCELFCKPGCVCDPGFLFSGSHCVNASSC) folds into the TIL 1 domain. N735, N758, and N833 each carry an N-linked (GlcNAc...) asparagine glycan. The 55-residue stretch at 740-794 (DCFYNDNYYKLGTDWFSPNCTEHCHCRPSSRMECQTFKCGTHTVCQLKNGQYGCH) folds into the VWFC 1 domain. The VWFD 1 domain maps to 799-976 (ATCSVYGDPH…TSEDADQQCE (178 aa)). Intrachain disulfides connect C801-C936 and C823-C975. Residues 943–983 (SSNDNQKPDGSPAKDEKELGSSWQTSEDADQQCEENQVSPP) are disordered. The region spanning 1070 to 1123 (CPRNSRYTLCARLCPDTCHSEFSGRACKDRCVEGCECDPGFVLSGLQCVSRSEC) is the TIL 2 domain. The 57-residue stretch at 1124–1180 (GCLDSTAGYVKVGERWFKPGCRQLCICEGNNRTRCVLWRCQAQEFCGQQDGIYGCHA) folds into the VWFC 2 domain. The N-linked (GlcNAc...) asparagine glycan is linked to N1154. The region spanning 1184-1364 (ATCTVSGDPH…INELSEPGCF (181 aa)) is the VWFD 2 domain. Disulfide bonds link C1186/C1324 and C1208/C1363. 2 N-linked (GlcNAc...) asparagine glycosylation sites follow: N1329 and N1448. The 56-residue stretch at 1456 to 1511 (CPSGSSYSTCANPCPATCLSLNNPSYCPSTLPCAEGCECQKGHILSGTSCVPLSQC) folds into the TIL 3 domain. The VWFC 3 domain occupies 1512 to 1568 (GCTTQRGSYHPVGESWYTDNSCSRLCTCSAHNNISCRQASCKPSQMCWPQDGLIRCR). 3 N-linked (GlcNAc...) asparagine glycosylation sites follow: N1544, N1596, and N1654. The region spanning 1573–1751 (GVCRIPDTSH…RDKEIDPNCQ (179 aa)) is the VWFD 3 domain. 2 cysteine pairs are disulfide-bonded: C1575–C1712 and C1597–C1750. Basic and acidic residues predominate over residues 1747 to 1759 (DPNCQEDDRKTEA). A disordered region spans residues 1747-1768 (DPNCQEDDRKTEAESQEQPSAN). An N-linked (GlcNAc...) asparagine glycan is attached at N1843. A TIL 4 domain is found at 1851–1907 (CSAHSVYTSCVPSCLPSCQDPEGQCTGAGAPSTCEEGCICEPGYVLSEQQCVARSQC). Residues 1908–1963 (GCRDARGTFLPVGRFRLSSGCSQMCVCTAGAIECRPFTCPSGSQCEPNEDGKDFCQ) form the VWFC 4 domain. A glycan (N-linked (GlcNAc...) asparagine) is linked at N1965. The 178-residue stretch at 1968–2145 (NLCSVFGDPH…WEVKAKEGHP (178 aa)) folds into the VWFD 4 domain. C1970 and C2107 are joined by a disulfide. N-linked (GlcNAc...) asparagine glycosylation is found at N2122, N2165, and N2178. Residues 2257-2310 (CPANTVYQSCMTPCPASCATLAVPRACDGPCVEGCASLPGYIYSGAQSLPMAHC) form the TIL 5 domain. The VWFC 5 domain occupies 2311–2365 (GCTNNGVYYQQGDSFVTENCSQRCTCASSGVLLCEPLSCRPGEICTLGNLTRGCF). Residues N2329 and N2359 are each glycosylated (N-linked (GlcNAc...) asparagine). Positions 2366 to 2402 (RDSPCLQNPCQNDGRCREQGTHFTCECELGYGGDLCT) constitute an EGF-like domain. 3 disulfide bridges follow: C2370-C2381, C2375-C2390, and C2392-C2401. Residues 2419–2439 (VAILLGMLMPTVLLVPAVTRV) traverse the membrane as a helical segment. The interval 2438–2476 (RVSRKRRRRRRPSRERTQSQNRGKRAGTDCAPEQAYKVA) is disordered. The segment covering 2439–2450 (VSRKRRRRRRPS) has biased composition (basic residues). Topologically, residues 2440-2476 (SRKRRRRRRPSRERTQSQNRGKRAGTDCAPEQAYKVA) are cytoplasmic.

As to quaternary structure, probably forms covalent oligomers. Post-translationally, the MAM domains and the mucin-like domains are missing from the zonadhesin that binds to the egg extracellular matrix. Processing might occur during sperm maturation and/or capacitation. In terms of tissue distribution, in testis, primarily in haploid spermatids. Not in lung, liver, heart, spleen, brain, kidney, epididymis.

The protein localises to the cell membrane. Functionally, binds in a species-specific manner to the zona pellucida of the egg. May be involved in gamete recognition and/or signaling. The protein is Zonadhesin (ZAN) of Sus scrofa (Pig).